The sequence spans 285 residues: Xanthoxin dehydrogenase (285 aa).

The residue at position 2 (Ser2) is an N-acetylserine.

Belongs to the short-chain dehydrogenases/reductases (SDR) family. In terms of tissue distribution, predominantly in roots and stems, and at lower levels in leaves and seeds.

It is found in the cytoplasm. It catalyses the reaction 2-cis,4-trans-xanthoxin + NAD(+) = 2-cis-(+)-abscisic aldehyde + NADH + H(+). The catalysed reaction is 2-trans,4-trans-xanthoxin + NAD(+) = 2-trans-(+)-abscisic aldehyde + NADH + H(+). Its function is as follows. Involved in the biosynthesis of abscisic acid. Catalyzes the conversion of xanthoxin to abscisic aldehyde. The sequence is that of Xanthoxin dehydrogenase from Arabidopsis thaliana (Mouse-ear cress).